A 213-amino-acid chain; its full sequence is ATP synthase peripheral stalk subunit OSCP, mitochondrial (213 aa).

Residues methionine 1–proline 23 constitute a mitochondrion transit peptide. Residues alanine 5 to proline 23 carry the SIFI-degron motif. N6-acetyllysine occurs at positions 54, 60, 70, and 73. Lysine 90 carries the post-translational modification N6-succinyllysine. An N6-acetyllysine; alternate mark is found at lysine 158 and lysine 162. N6-succinyllysine; alternate is present on residues lysine 158 and lysine 162. Lysine 172, lysine 176, and lysine 192 each carry N6-acetyllysine. An N6-succinyllysine modification is found at lysine 199.

This sequence belongs to the ATPase delta chain family. As to quaternary structure, component of the ATP synthase complex composed at least of ATP5F1A/subunit alpha, ATP5F1B/subunit beta, ATP5MC1/subunit c (homooctomer), MT-ATP6/subunit a, MT-ATP8/subunit 8, ATP5ME/subunit e, ATP5MF/subunit f, ATP5MG/subunit g, ATP5MK/subunit k, ATP5MJ/subunit j, ATP5F1C/subunit gamma, ATP5F1D/subunit delta, ATP5F1E/subunit epsilon, ATP5PF/subunit F6, ATP5PB/subunit b, ATP5PD/subunit d, ATP5PO/subunit OSCP. ATP synthase complex consists of a soluble F(1) head domain (subunits alpha(3) and beta(3)) - the catalytic core - and a membrane F(0) domain - the membrane proton channel (subunits c, a, 8, e, f, g, k and j). These two domains are linked by a central stalk (subunits gamma, delta, and epsilon) rotating inside the F1 region and a stationary peripheral stalk (subunits F6, b, d, and OSCP). Post-translationally, acetylation at Lys-162 decreases ATP production. Deacetylated by SIRT3. In response to mitochondrial stress, the precursor protein is ubiquitinated by the SIFI complex in the cytoplasm before mitochondrial import, leading to its degradation. Within the SIFI complex, UBR4 initiates ubiquitin chain that are further elongated or branched by KCMF1.

The protein resides in the mitochondrion. It localises to the mitochondrion inner membrane. Functionally, subunit OSCP, of the mitochondrial membrane ATP synthase complex (F(1)F(0) ATP synthase or Complex V) that produces ATP from ADP in the presence of a proton gradient across the membrane which is generated by electron transport complexes of the respiratory chain. ATP synthase complex consist of a soluble F(1) head domain - the catalytic core - and a membrane F(1) domain - the membrane proton channel. These two domains are linked by a central stalk rotating inside the F(1) region and a stationary peripheral stalk. During catalysis, ATP synthesis in the catalytic domain of F(1) is coupled via a rotary mechanism of the central stalk subunits to proton translocation. In vivo, can only synthesize ATP although its ATP hydrolase activity can be activated artificially in vitro. Part of the complex F(0) domain. Part of the complex F(0) domain and the peripheric stalk, which acts as a stator to hold the catalytic alpha(3)beta(3) subcomplex and subunit a/ATP6 static relative to the rotary elements. This Homo sapiens (Human) protein is ATP synthase peripheral stalk subunit OSCP, mitochondrial.